The primary structure comprises 413 residues: Serine/threonine-protein phosphatase 2A 55 kDa regulatory subunit B beta isoform (413 aa).

WD repeat units follow at residues 1 to 31 (EFNH…KNQV), 57 to 98 (EIEE…KRPE), 141 to 179 (AHTY…QSFN), and 190 to 230 (ELTE…LCDR). S245 carries the phosphoserine modification. 3 WD repeats span residues 249 to 287 (EIIS…RPIE), 304 to 345 (ENDC…DVTL), and 380 to 412 (DFSK…QDKV). Y265 is subject to Phosphotyrosine. Position 268 is a phosphothreonine (T268).

The protein belongs to the phosphatase 2A regulatory subunit B family. As to quaternary structure, PP2A consists of a common heterodimeric core enzyme, composed of a 36 kDa catalytic subunit (subunit C) and a 65 kDa constant regulatory subunit (PR65 or subunit A), that associates with a variety of regulatory subunits. Proteins that associate with the core dimer include three families of regulatory subunits B (the R2/B/PR55/B55, R3/B''/PR72/PR130/PR59 and R5/B'/B56 families), the 48 kDa variable regulatory subunit, viral proteins, and cell signaling molecules. Interacts with TOMM22. Interacts with IER5 (via N- and C-terminal regions). As to expression, brain.

The protein resides in the cytoplasm. The protein localises to the cytoskeleton. It is found in the membrane. The B regulatory subunit might modulate substrate selectivity and catalytic activity, and might also direct the localization of the catalytic enzyme to a particular subcellular compartment. The protein is Serine/threonine-protein phosphatase 2A 55 kDa regulatory subunit B beta isoform (PPP2R2B) of Oryctolagus cuniculus (Rabbit).